A 227-amino-acid polypeptide reads, in one-letter code: Uracil-DNA glycosylase 2 (227 aa).

Catalysis depends on aspartate 67, which acts as the Proton acceptor.

It belongs to the uracil-DNA glycosylase (UDG) superfamily. UNG family.

The protein resides in the cytoplasm. The enzyme catalyses Hydrolyzes single-stranded DNA or mismatched double-stranded DNA and polynucleotides, releasing free uracil.. Its function is as follows. Excises uracil residues from the DNA which can arise as a result of misincorporation of dUMP residues by DNA polymerase or due to deamination of cytosine. This Streptomyces avermitilis (strain ATCC 31267 / DSM 46492 / JCM 5070 / NBRC 14893 / NCIMB 12804 / NRRL 8165 / MA-4680) protein is Uracil-DNA glycosylase 2 (ung2).